Consider the following 1243-residue polypeptide: Plasma membrane calcium-transporting ATPase 2 (1243 aa).

Positions 1–13 (MGDMTNSDFYSKN) are enriched in polar residues. The tract at residues 1–24 (MGDMTNSDFYSKNQRNESSHGGEF) is disordered. Residues 1–94 (MGDMTNSDFY…NFIPPKKPKT (94 aa)) lie on the Cytoplasmic side of the membrane. Serine 18 carries the post-translational modification Phosphoserine. The helical transmembrane segment at 95-115 (FLQLVWEALQDVTLIILEIAA) threads the bilayer. Residues 116–152 (IISLGLSFYHPPGEGNEGCATAQGGAEDEGEAEAGWI) are Extracellular-facing. A helical membrane pass occupies residues 153 to 173 (EGAAILLSVICVVLVTAFNDW). The Cytoplasmic portion of the chain corresponds to 174–390 (SKEKQFRGLQ…KEKSVLQGKL (217 aa)). Residues 334–381 (GKMQDGNVDASQSKAKQQDGAAAMEMQPLKSAEGGDADDRKKASMHKK) are disordered. The chain crosses the membrane as a helical span at residues 391-410 (TKLAVQIGKAGLVMSAITVI). Over 411-443 (ILVLYFTVDTFVVNKKPWLPECTPVYVQYFVKF) the chain is Extracellular. The chain crosses the membrane as a helical span at residues 444 to 461 (FIIGVTVLVVAVPEGLPL). Topologically, residues 462–875 (AVTISLAYSV…MWGRNVYDSI (414 aa)) are cytoplasmic. The active-site 4-aspartylphosphate intermediate is aspartate 499. Mg(2+) contacts are provided by aspartate 820 and aspartate 824. Residues 876–895 (SKFLQFQLTVNVVAVIVAFT) form a helical membrane-spanning segment. Residues 896 to 905 (GACITQDSPL) are Extracellular-facing. A helical membrane pass occupies residues 906 to 926 (KAVQMLWVNLIMDTFASLALA). Topologically, residues 927 to 946 (TEPPTETLLLRKPYGRNKPL) are cytoplasmic. The helical transmembrane segment at 947–969 (ISRTMMKNILGHAVYQLALIFTL) threads the bilayer. Residues 970 to 987 (LFVGEKMFQIDSGRNAPL) are Extracellular-facing. A helical membrane pass occupies residues 988-1009 (HSPPSEHYTIIFNTFVMMQLFN). Over 1010-1028 (EINARKIHGERNVFDGIFR) the chain is Cytoplasmic. A helical membrane pass occupies residues 1029-1050 (NPIFCTIVLGTFAIQIVIVQFG). Topologically, residues 1051–1060 (GKPFSCSPLQ) are extracellular. A helical transmembrane segment spans residues 1061 to 1082 (LDQWMWCIFIGLGELVWGQVIA). At 1083–1243 (TIPTSRLKFL…SPIHSLETSL (161 aa)) the chain is on the cytoplasmic side. Glutamate 1120, arginine 1132, and leucine 1134 each carry phosphoserine. The interval 1123 to 1140 (LRRGQILWFRGLNRIQTQ) is calmodulin-binding subdomain A. Threonine 1139 carries the phosphothreonine; by PKC modification. The interval 1141–1150 (IRVVKAFRSS) is calmodulin-binding subdomain B. A phosphoserine mark is found at alanine 1146, leucine 1151, serine 1163, histidine 1165, aspartate 1177, and serine 1178. Residue threonine 1188 is modified to Phosphothreonine. Positions 1194–1243 (AALKQNSSPPSSLNKNNSAIDSGINLTTDTSKSATSSSPGSPIHSLETSL) are disordered. Composition is skewed to low complexity over residues 1196 to 1211 (LKQN…KNNS) and 1220 to 1234 (TTDT…SPGS). Serine 1201 is modified (phosphoserine; by PKA). The residue at position 1211 (serine 1211) is a Phosphoserine.

It belongs to the cation transport ATPase (P-type) (TC 3.A.3) family. Type IIB subfamily. Interacts with PDZD11. As to expression, mainly expressed in brain cortex. Found in low levels in skeletal muscle, heart muscle, stomach, liver, kidney and lung. Isoforms containing segment B are found in brain cortex and at low levels in other tissues. Isoforms containing segments X and W are found at low levels in all tissues. Isoforms containing segment A and segment Z are found at low levels in skeletal muscle and heart muscle.

It is found in the cell membrane. The protein resides in the synapse. It localises to the apical cell membrane. The protein localises to the basolateral cell membrane. The catalysed reaction is Ca(2+)(in) + ATP + H2O = Ca(2+)(out) + ADP + phosphate + H(+). With respect to regulation, up-regulated by calmodulin which increases the affinity of the pump for Ca(2+) ions. Its function is as follows. ATP-driven Ca(2+) ion pump involved in the maintenance of basal intracellular Ca(2+) levels in specialized cells of cerebellar circuit and vestibular and cochlear systems. Uses ATP as an energy source to transport cytosolic Ca(2+) ions across the plasma membrane to the extracellular compartment. Has fast activation and Ca(2+) clearance rate suited to control fast neuronal Ca(2+) dynamics. At parallel fiber to Purkinje neuron synapse, mediates presynaptic Ca(2+) efflux in response to climbing fiber-induced Ca(2+) rise. Provides for fast return of Ca(2+) concentrations back to their resting levels, ultimately contributing to long-term depression induction and motor learning. Plays an essential role in hearing and balance. In cochlear hair cells, shuttles Ca(2+) ions from stereocilia to the endolymph and dissipates Ca(2+) transients generated by the opening of the mechanoelectrical transduction channels. Regulates Ca(2+) levels in the vestibular system, where it contributes to the formation of otoconia. In non-excitable cells, regulates Ca(2+) signaling through spatial control of Ca(2+) ions extrusion and dissipation of Ca(2+) transients generated by store-operated channels. In lactating mammary gland, allows for the high content of Ca(2+) ions in the milk. The protein is Plasma membrane calcium-transporting ATPase 2 of Homo sapiens (Human).